A 480-amino-acid polypeptide reads, in one-letter code: MFS-type transporter oryF (480 aa).

A compositionally biased stretch (basic and acidic residues) spans 1 to 10 (MAEEVNERTR). Residues 1–24 (MAEEVNERTRLLSQSDDPSPSLEE) form a disordered region. A compositionally biased stretch (low complexity) spans 11–22 (LLSQSDDPSPSL). 12 helical membrane passes run 41–61 (LCIAVISVYGLISPVIAAIIV), 81–101 (AFVSVYVLGWSFAPLVVGPLS), 107–127 (ISLLNTGHGLFLVFNALCAFA), 138–158 (FITGAVGSAPLSIGAGIIGDL), 170–190 (LYTLGPLLGPAIAPITGAYIV), 197–217 (AIFAWCSLYILITWVVGLCTL), 264–284 (FLGTQPIIQVLSLFMGYLFGL), 308–328 (ALNYISIAGGFILGSQITGSL), 351–371 (ILMLPAALLVPTGLLIYGWSA), 378–398 (IMPNIGIGIYALGLIMSYQCI), 415–435 (GALTILRSLLGFVLPILAPLI), and 443–463 (WGSSLLALWALVMGGLVPILL).

The protein belongs to the major facilitator superfamily.

The protein resides in the membrane. Its function is as follows. MFS-type transporter; part of the gene cluster that mediates the biosynthesis of oryzines, natural products with an unusual maleidride backbone. The sequence is that of MFS-type transporter oryF from Aspergillus oryzae (strain ATCC 42149 / RIB 40) (Yellow koji mold).